The following is a 31-amino-acid chain: Photosystem II reaction center protein T (31 aa).

A helical membrane pass occupies residues 3-23 (SVAYIVVLTMALAVLFFAIAF).

It belongs to the PsbT family. As to quaternary structure, PSII is composed of 1 copy each of membrane proteins PsbA, PsbB, PsbC, PsbD, PsbE, PsbF, PsbH, PsbI, PsbJ, PsbK, PsbL, PsbM, PsbT, PsbX, PsbY, PsbZ, Psb30/Ycf12, peripheral proteins PsbO, CyanoQ (PsbQ), PsbU, PsbV and a large number of cofactors. It forms dimeric complexes.

Its subcellular location is the cellular thylakoid membrane. Found at the monomer-monomer interface of the photosystem II (PS II) dimer, plays a role in assembly and dimerization of PSII. PSII is a light-driven water plastoquinone oxidoreductase, using light energy to abstract electrons from H(2)O, generating a proton gradient subsequently used for ATP formation. This Crocosphaera subtropica (strain ATCC 51142 / BH68) (Cyanothece sp. (strain ATCC 51142)) protein is Photosystem II reaction center protein T.